The following is a 194-amino-acid chain: Imidazoleglycerol-phosphate dehydratase (194 aa).

It belongs to the imidazoleglycerol-phosphate dehydratase family.

It is found in the cytoplasm. It catalyses the reaction D-erythro-1-(imidazol-4-yl)glycerol 3-phosphate = 3-(imidazol-4-yl)-2-oxopropyl phosphate + H2O. It participates in amino-acid biosynthesis; L-histidine biosynthesis; L-histidine from 5-phospho-alpha-D-ribose 1-diphosphate: step 6/9. This is Imidazoleglycerol-phosphate dehydratase from Chlorobaculum tepidum (strain ATCC 49652 / DSM 12025 / NBRC 103806 / TLS) (Chlorobium tepidum).